A 339-amino-acid chain; its full sequence is Photosystem II assembly lipoprotein Ycf48 (339 aa).

Residues 1–22 (MVIVKSWQKIFALLVVLLLCIG) form the signal peptide. C23 carries N-palmitoyl cysteine lipidation. Residue C23 is the site of S-diacylglycerol cysteine attachment.

Belongs to the Ycf48 family. As to quaternary structure, part of early PSII assembly complexes which includes D1 (psbA) and PsbI; not found in mature PSII. Binds to the lumenal side of PSII complexes. Interacts with YidC.

It is found in the cellular thylakoid membrane. A factor required for optimal assembly of photosystem II (PSII), acting in the early stages of PSII assembly. Also plays a role in replacement of photodamaged D1 (psbA). Assists YidC in synthesis of chlorophyll-binding proteins. In Trichormus variabilis (strain ATCC 29413 / PCC 7937) (Anabaena variabilis), this protein is Photosystem II assembly lipoprotein Ycf48.